We begin with the raw amino-acid sequence, 589 residues long: PTS system mannitol-specific EIICB component (589 aa).

Over 1 to 25 the chain is Cytoplasmic; sequence MEEKVSLKVRVQKLGTSLSNMVMPN. Positions 14–347 constitute a PTS EIIC type-2 domain; that stretch reads LGTSLSNMVM…LHADKSTEDS (334 aa). The chain crosses the membrane as a helical span at residues 26–47; sequence IGAFIAWGVLTALFIADGYLPN. Over 48–51 the chain is Extracellular; sequence EQLA. Residues 52–72 form a helical membrane-spanning segment; the sequence is TVVGPMLTYLLPILIGYTGGY. The Cytoplasmic portion of the chain corresponds to 73–135; that stretch reads MIHGQRGAVV…PGFEMLVNNF (63 aa). A helical transmembrane segment spans residues 136-157; it reads SAGLVGFALLLLAFYAIGPVVS. The Extracellular segment spans residues 158–166; it reads TLTGAVGNG. A helical transmembrane segment spans residues 167–187; that stretch reads VEAIVNARLLPMANIIIEPAK. Residues 188–274 are Cytoplasmic-facing; the sequence is VLFLNNALNH…VMMKPTLFLA (87 aa). A helical membrane pass occupies residues 275-294; it reads AMAGGISGTFTFQLLDAGLK. Over 295–316 the chain is Extracellular; the sequence is SPASPGSIIAIMATAPKGVWPH. Residues 317-338 traverse the membrane as a helical segment; sequence LNILLGVLVAAVVSFLIAALIL. The Cytoplasmic segment spans residues 339–589; sequence HADKSTEDSL…YDKMAARMYK (251 aa). Residues 381–476 form the PTS EIIB type-2 domain; the sequence is EKIIFACDAG…SLTGASPIAE (96 aa). The Phosphocysteine intermediate; for EIIB activity role is filled by Cys-387. Cys-387 bears the Phosphocysteine; by EIIA mark.

Homodimer.

It localises to the cell membrane. It catalyses the reaction D-mannitol(out) + N(pros)-phospho-L-histidyl-[protein] = D-mannitol 1-phosphate(in) + L-histidyl-[protein]. Functionally, the phosphoenolpyruvate-dependent sugar phosphotransferase system (sugar PTS), a major carbohydrate active transport system, catalyzes the phosphorylation of incoming sugar substrates concomitantly with their translocation across the cell membrane. The enzyme II CmtAB PTS system is involved in D-mannitol transport. The protein is PTS system mannitol-specific EIICB component (mtlA) of Streptococcus pneumoniae (strain ATCC BAA-255 / R6).